A 305-amino-acid polypeptide reads, in one-letter code: Probable 4-deoxy-4-formamido-L-arabinose-phosphoundecaprenol deformylase ArnD (305 aa).

A NodB homology domain is found at 7-262 (TKVGLRIDVD…QAKENNIEFV (256 aa)).

The protein belongs to the polysaccharide deacetylase family. ArnD deformylase subfamily.

It carries out the reaction 4-deoxy-4-formamido-alpha-L-arabinopyranosyl di-trans,octa-cis-undecaprenyl phosphate + H2O = 4-amino-4-deoxy-alpha-L-arabinopyranosyl di-trans,octa-cis-undecaprenyl phosphate + formate. It participates in glycolipid biosynthesis; 4-amino-4-deoxy-alpha-L-arabinose undecaprenyl phosphate biosynthesis; 4-amino-4-deoxy-alpha-L-arabinose undecaprenyl phosphate from UDP-4-deoxy-4-formamido-beta-L-arabinose and undecaprenyl phosphate: step 2/2. It functions in the pathway bacterial outer membrane biogenesis; lipopolysaccharide biosynthesis. Functionally, catalyzes the deformylation of 4-deoxy-4-formamido-L-arabinose-phosphoundecaprenol to 4-amino-4-deoxy-L-arabinose-phosphoundecaprenol. The modified arabinose is attached to lipid A and is required for resistance to polymyxin and cationic antimicrobial peptides. The polypeptide is Probable 4-deoxy-4-formamido-L-arabinose-phosphoundecaprenol deformylase ArnD (Shewanella sediminis (strain HAW-EB3)).